Here is a 97-residue protein sequence, read N- to C-terminus: Putative membrane protein insertion efficiency factor (97 aa).

Belongs to the UPF0161 family.

Its subcellular location is the cell membrane. Could be involved in insertion of integral membrane proteins into the membrane. This Lactobacillus johnsonii (strain CNCM I-12250 / La1 / NCC 533) protein is Putative membrane protein insertion efficiency factor.